Reading from the N-terminus, the 280-residue chain is 3-methyl-2-oxobutanoate hydroxymethyltransferase (280 aa).

Mg(2+) contacts are provided by aspartate 49 and aspartate 88. Residues 49-50 (DS), aspartate 88, and lysine 118 contribute to the 3-methyl-2-oxobutanoate site. Glutamate 120 contacts Mg(2+). Residue glutamate 186 is the Proton acceptor of the active site.

This sequence belongs to the PanB family. As to quaternary structure, homodecamer; pentamer of dimers. Requires Mg(2+) as cofactor.

The protein resides in the cytoplasm. The catalysed reaction is 3-methyl-2-oxobutanoate + (6R)-5,10-methylene-5,6,7,8-tetrahydrofolate + H2O = 2-dehydropantoate + (6S)-5,6,7,8-tetrahydrofolate. It participates in cofactor biosynthesis; (R)-pantothenate biosynthesis; (R)-pantoate from 3-methyl-2-oxobutanoate: step 1/2. Its function is as follows. Catalyzes the reversible reaction in which hydroxymethyl group from 5,10-methylenetetrahydrofolate is transferred onto alpha-ketoisovalerate to form ketopantoate. The sequence is that of 3-methyl-2-oxobutanoate hydroxymethyltransferase from Ruegeria sp. (strain TM1040) (Silicibacter sp.).